The primary structure comprises 571 residues: Proline--tRNA ligase (571 aa).

This sequence belongs to the class-II aminoacyl-tRNA synthetase family. ProS type 1 subfamily. In terms of assembly, homodimer.

Its subcellular location is the cytoplasm. It carries out the reaction tRNA(Pro) + L-proline + ATP = L-prolyl-tRNA(Pro) + AMP + diphosphate. Its function is as follows. Catalyzes the attachment of proline to tRNA(Pro) in a two-step reaction: proline is first activated by ATP to form Pro-AMP and then transferred to the acceptor end of tRNA(Pro). As ProRS can inadvertently accommodate and process non-cognate amino acids such as alanine and cysteine, to avoid such errors it has two additional distinct editing activities against alanine. One activity is designated as 'pretransfer' editing and involves the tRNA(Pro)-independent hydrolysis of activated Ala-AMP. The other activity is designated 'posttransfer' editing and involves deacylation of mischarged Ala-tRNA(Pro). The misacylated Cys-tRNA(Pro) is not edited by ProRS. This is Proline--tRNA ligase from Pseudomonas putida (strain GB-1).